A 213-amino-acid polypeptide reads, in one-letter code: BAG family molecular chaperone regulator 6, mitochondrial (213 aa).

The IQ domain maps to 53 to 82 (DDAAAARIQAAFRGHLVRRHAAAVRGADDE). The BAG domain maps to 75–152 (AVRGADDEAT…GLQEVFDAVL (78 aa)).

In terms of assembly, interacts with CAM1-1 under normal conditions. Dissociation of the interaction when calcium-CAM1-1 binding increases under saline-alkaline stress.

The protein localises to the mitochondrion. Co-chaperone that regulates stress responses. Acts as a negative regulator of saline-alkaline stress tolerance. May participate in stress response through regulating the homeostasis of iron, manganese and zinc ions. The sequence is that of BAG family molecular chaperone regulator 6, mitochondrial from Oryza sativa subsp. japonica (Rice).